The following is a 380-amino-acid chain: MTLQINAAFDGGNIHVVEQDGNRIYLEIIKDNQSDFFQWFYFKVTGAKDQALELVVTNASDSAYPAGWPDYQARVSEDRQDWQMTETDYRDGMLTIRYTPRSNIAYFAYFAPYSMERHHDLIARMAGKSGVGYEMLGKSLDGQSMDCLTMGEGRRSIWLIARQHPGETMAEWWMEGALERLTDENDSVARLLRQKARFHIMPNMNPDGSCRGHLRTNACGANLNREWAEPTAERSPEVLDVRNHMDKTGVDFVMDVHGDEAIPHVFLAGFEGIPDLDKAQDKLFRRYRNKLAKYTPDFQRHYGYENDEPGQANLALATNQLAYRYKAVSMTLEMPFKDHDDMPDLKKGWSPERSKQLGRDCLAILAEMIDQLPISGKDLA.

In terms of domain architecture, Peptidase M14 spans 111–369; the sequence is APYSMERHHD…DCLAILAEMI (259 aa). The Zn(2+) site is built by histidine 164, glutamate 167, and histidine 257. The active-site Proton donor/acceptor is glutamate 333.

Requires Zn(2+) as cofactor.

This is an uncharacterized protein from Zymomonas mobilis subsp. mobilis (strain ATCC 31821 / ZM4 / CP4).